The sequence spans 494 residues: Glutamyl-tRNA(Gln) amidotransferase subunit A (494 aa).

Catalysis depends on charge relay system residues Lys-79 and Ser-159. Ser-183 (acyl-ester intermediate) is an active-site residue.

It belongs to the amidase family. GatA subfamily. In terms of assembly, heterotrimer of A, B and C subunits.

It catalyses the reaction L-glutamyl-tRNA(Gln) + L-glutamine + ATP + H2O = L-glutaminyl-tRNA(Gln) + L-glutamate + ADP + phosphate + H(+). Functionally, allows the formation of correctly charged Gln-tRNA(Gln) through the transamidation of misacylated Glu-tRNA(Gln) in organisms which lack glutaminyl-tRNA synthetase. The reaction takes place in the presence of glutamine and ATP through an activated gamma-phospho-Glu-tRNA(Gln). The sequence is that of Glutamyl-tRNA(Gln) amidotransferase subunit A from Bartonella bacilliformis (strain ATCC 35685 / KC583 / Herrer 020/F12,63).